Here is a 251-residue protein sequence, read N- to C-terminus: Triosephosphate isomerase (251 aa).

Position 9-11 (9-11) interacts with substrate; that stretch reads NWK. H95 acts as the Electrophile in catalysis. The active-site Proton acceptor is E167. Substrate is bound by residues G173, S213, and 234–235; that span reads GG.

It belongs to the triosephosphate isomerase family. Homodimer.

The protein localises to the cytoplasm. The catalysed reaction is D-glyceraldehyde 3-phosphate = dihydroxyacetone phosphate. It functions in the pathway carbohydrate biosynthesis; gluconeogenesis. It participates in carbohydrate degradation; glycolysis; D-glyceraldehyde 3-phosphate from glycerone phosphate: step 1/1. Its function is as follows. Involved in the gluconeogenesis. Catalyzes stereospecifically the conversion of dihydroxyacetone phosphate (DHAP) to D-glyceraldehyde-3-phosphate (G3P). In Fusobacterium nucleatum subsp. nucleatum (strain ATCC 25586 / DSM 15643 / BCRC 10681 / CIP 101130 / JCM 8532 / KCTC 2640 / LMG 13131 / VPI 4355), this protein is Triosephosphate isomerase.